The following is a 76-amino-acid chain: Gas vesicle protein A1 (76 aa).

Binds to GvpF1 regions lie at residues 1–22 (MAQP…KGVV) and 2–43 (AQPD…EARV). The segment at 9–19 (LAEVLDRVLDK) is alpha helix 1. The segment at 23 to 31 (VDVWARVSL) is beta-strand 1. Positions 32–34 (VGI) are beta turn. The segment at 35–43 (EILTVEARV) is beta-strand 2. The segment at 48 to 67 (VDTFLHYAEEIAKIEQAELT) is alpha helix 2.

This sequence belongs to the gas vesicle GvpA family. Major component of the gas vesicle shell which is 2 nm thick and consists of a single layer of the protein. It forms 4.6 nm-wide ribs nearly perpendicular to the long axis of the vesicle. Modeled as antiparallel homodimers. The ribs form a low-pitch helix rather than a stack of hoops. Interacts with GvpF1 via its N-terminus (residues 1-43) in early growth stages, none of the other GvpG1 to GvpM1 proteins were seen to directly bind GvpA1 in H.volcanii experiments. Might interact with GvpJ1. Might interact with GvpG1, GvpH1, GvpJ1, GvpM1, GvpN1 and GvpO1.

It is found in the gas vesicle shell. Functionally, gas vesicles are hollow, gas filled proteinaceous nanostructures found in several microbial planktonic microorganisms. They allow positioning of halobacteria at the optimal depth for growth in the poorly aerated shallow brine pools of their habitat. GvpA forms the protein shell. The critical collapse pressure (CCP) of p-vac gas vesicles is 0.66 MPa; mutating residues in p-gvpA to those found in c-gvpA increases the CCP. These residues partially and independently control the width and strength of gas vesicles. In stationary phase gas vesicles, about 30 times more GvpA1 is found than GvpA2. In terms of biological role, expression of a 9.5 kb p-vac DNA fragment containing 2 divergently transcribed regions (gvpD-gvpE-gvpF-gvpG-gvpH-gvpI-gvpJ-gvpK-gvpL-gvpM and gvpA-gvpC-gvpN-gvpO) allows H.volcanii to produce gas vesicles. All site-directed mutagenesis is tested in H.volcanii. A minimal gas vesicle can be made in H.volcanii by gvpA1-gvpO1 plus gvpF1-gvpG1-gvpJ1-gvpK1-gvpL1-gvpM1; lack of enough GvpJ1 prevents their formation. A similar region restores gas vesicle production in H.halobium without the p-vac locus, but it still has the c-vac locus. This is Gas vesicle protein A1 from Halobacterium salinarum (strain ATCC 700922 / JCM 11081 / NRC-1) (Halobacterium halobium).